A 191-amino-acid chain; its full sequence is MEVPREIIEKLEIFQKLVKKWNKSINLVSDNTIHNFWQRHILDSLQLIQYIDNKEIHLVDIGSGAGLPGIVLSIAGVAQVSLIEADLRKCIFLEKASKISNNNVQIINQRIEKVEIDCSILTCRAFSNLNTIFNCIKNISVREKFLLLKGKNYLTEIVEAKERWLFGYLIHQSITCEEGKILEVSNLTKMI.

Residues glycine 62, leucine 67, 111 to 112 (IE), and arginine 124 contribute to the S-adenosyl-L-methionine site.

Belongs to the methyltransferase superfamily. RNA methyltransferase RsmG family.

It is found in the cytoplasm. The enzyme catalyses guanosine(527) in 16S rRNA + S-adenosyl-L-methionine = N(7)-methylguanosine(527) in 16S rRNA + S-adenosyl-L-homocysteine. In terms of biological role, specifically methylates the N7 position of guanine in position 527 of 16S rRNA. The polypeptide is Ribosomal RNA small subunit methyltransferase G (Rickettsia rickettsii (strain Sheila Smith)).